The primary structure comprises 468 residues: Putative magnesium transporter MRS2-G (468 aa).

Disordered stretches follow at residues 1–76 (MGRR…AGKV) and 182–205 (NGQP…VPRL). Composition is skewed to low complexity over residues 14–23 (ASNASTSSST) and 31–45 (RLPS…SSPS). Positions 46-67 (PASPSPPPPSASHPAPPSPPLA) are enriched in pro residues. The span at 187–197 (GDDHGEKHDDS) shows a compositional bias: basic and acidic residues. 2 helical membrane-spanning segments follow: residues 402 to 422 (LTLT…GAFA) and 437 to 457 (FFWP…IVLL).

It belongs to the CorA metal ion transporter (MIT) (TC 1.A.35.5) family.

The protein resides in the membrane. In terms of biological role, putative magnesium transporter. This chain is Putative magnesium transporter MRS2-G (MRS2-G), found in Oryza sativa subsp. indica (Rice).